A 7763-amino-acid polypeptide reads, in one-letter code: Nonribosomal peptide synthetase agiA (7763 aa).

The condensation 1 stretch occupies residues 20–168 (APSVMQEEMI…DGWSARALLE (149 aa)). Residues 469 to 866 (EQAASKWPSK…GRADGQIKLR (398 aa)) form an adenylation 1 region. The Carrier 1 domain occupies 995–1071 (LPESPAERLL…DVARAMSPSS (77 aa)). Ser1032 carries the post-translational modification O-(pantetheine 4'-phosphoryl)serine. The interval 1104 to 1526 (IYPCTPQQEG…GLSDQKLITG (423 aa)) is condensation 2. Residues 1562–1968 (FEMQADMTPQ…GRIDSQIKLR (407 aa)) form an adenylation 2 region. The region spanning 2090-2166 (WEQGSIEDKI…SQAKCATSHT (77 aa)) is the Carrier 2 domain. Residue Ser2127 is modified to O-(pantetheine 4'-phosphoryl)serine. The interval 2212–2556 (DHFNQSVLLD…IMPLVFNYQG (345 aa)) is epimerase (E). Residues 2676–3016 (DIIPCTPMQR…PALVNTLLNF (341 aa)) form a condensation 3 region. An adenylation 3 region spans residues 3136–3531 (WAAQVPEKVA…GRMDDQIKIR (396 aa)). A Carrier 3 domain is found at 3667–3743 (GPESPTEIML…ELATILNTSY (77 aa)). Ser3704 is subject to O-(pantetheine 4'-phosphoryl)serine. The interval 3789 to 4238 (VMPCTPFQEG…ISQSIDALVQ (450 aa)) is condensation 4. The interval 4321–4687 (VGSQQPIIPI…GRFDRQIKIR (367 aa)) is adenylation 4. One can recognise a Carrier 4 domain in the interval 4806 to 4880 (APTTEREKVI…DLARQLESTA (75 aa)). Ser4840 carries the O-(pantetheine 4'-phosphoryl)serine modification. The segment at 4902-5339 (SFAQGRLWFL…ALLNDLSMHD (438 aa)) is condensation 5. Positions 5361–5765 (FRQEARSHPD…GRRDDQVKIR (405 aa)) are adenylation 5. Residues 5820 to 5975 (DAWKNVFDTE…YLSEIVQKLV (156 aa)) form an S-adenosyl-L-methionine-dependent N-methyltransferase region. The Carrier 5 domain occupies 6306 to 6381 (EYGSEMERIL…RLADRLLSKQ (76 aa)). Ser6341 bears the O-(pantetheine 4'-phosphoryl)serine mark. Residues 6378 to 6399 (LSKQSDSNTEANTSTDGKTQHS) are disordered. A compositionally biased stretch (polar residues) spans 6379 to 6399 (SKQSDSNTEANTSTDGKTQHS). The condensation 6 stretch occupies residues 6424–6883 (MPCTPFQEGV…TVGDAEEAAL (460 aa)). The segment at 6913–7327 (RQAMESPCKI…GRMDSQVKLR (415 aa)) is adenylation 6. The Carrier 6 domain maps to 7446-7522 (PSPGTLEATL…SQAFRILCDV (77 aa)). Ser7483 is modified (O-(pantetheine 4'-phosphoryl)serine). The interval 7542–7638 (TMVLIHPFFG…TGKGSPFSTV (97 aa)) is thioesterase (TE).

It belongs to the NRP synthetase family.

Functionally, nonribosomal peptide synthetase; part of the gene cluster that mediates the biosynthesis of the aspergillicins A and F, 2 cryptic cyclic hexa-depsipeptides. The hexamodular NRPS agiA catalyzes the condensation of the six amino acid residues including N-Me-L-O-Me-tyrosine, L-proline 1, L-proline 2, D-isoleucine, O-acetyl-threonine, and L-isoleucine. The starting condensation domain (C1) of agiA probably loads acetyl-CoA which is condensed on the N-terminus of threonine by the first module to yield O-acetyl-threonine. The second module then loads L-isoleucine. The epimerase (E) domain on module 2 is probably involved in the formation of the D-isoleucine moiety. Modules 3 and 4 further load 2 successive L-prolines. Module 5 is then involved in the condensation of O-Me-L-tyrosine produced by the O-methyltransferase agiB and the N-methyl transferase (NMeT) domain on module 5 probably catalyzes the N-methylation to yield the N-Me-L-O-Me-tyrosine moiety. The A domain of module 5 loads preferentially O-Me-L-tyrosine, but it can also accept L-phenylalanine, which leads to the production of aspergillicin G. Module 6 then loads the last residue, L-isoleucine. The C-terminal thiolesterase (TE) domain probably cyclizes the peptide using the hydroxy group from threonine to form the cyclic depsipeptide. This Aspergillus flavus (strain ATCC 200026 / FGSC A1120 / IAM 13836 / NRRL 3357 / JCM 12722 / SRRC 167) protein is Nonribosomal peptide synthetase agiA.